The primary structure comprises 462 residues: General transcription factor IIH subunit 4 (462 aa).

The protein belongs to the TFB2 family. As to quaternary structure, component of the 7-subunit TFIIH core complex composed of XPB/ERCC3, XPD/ERCC2, GTF2H1, GTF2H2, GTF2H3, GTF2H4 and GTF2H5, which is active in NER. The core complex associates with the 3-subunit CDK-activating kinase (CAK) module composed of CCNH/cyclin H, CDK7 and MNAT1 to form the 10-subunit holoenzyme (holo-TFIIH) active in transcription. Part of TBP-based Pol II pre-initiation complex (PIC), in which Pol II core assembles with general transcription factors and other specific initiation factors including GTF2E1, GTF2E2, GTF2F1, GTF2F2, TCEA1, ERCC2, ERCC3, GTF2H2, GTF2H3, GTF2H4, GTF2H5, GTF2A1, GTF2A2, GTF2B and TBP; this large multi-subunit PIC complex mediates DNA unwinding and targets Pol II core to the transcription start site where the first phosphodiester bond forms.

It localises to the nucleus. Functionally, component of the general transcription and DNA repair factor IIH (TFIIH) core complex, which is involved in general and transcription-coupled nucleotide excision repair (NER) of damaged DNA and, when complexed to CAK, in RNA transcription by RNA polymerase II. In NER, TFIIH acts by opening DNA around the lesion to allow the excision of the damaged oligonucleotide and its replacement by a new DNA fragment. In transcription, TFIIH has an essential role in transcription initiation. When the pre-initiation complex (PIC) has been established, TFIIH is required for promoter opening and promoter escape. Phosphorylation of the C-terminal tail (CTD) of the largest subunit of RNA polymerase II by the kinase module CAK controls the initiation of transcription. In terms of biological role, stimulates the ATPase activity of TFIIH subunit XPB/ERCC3. The protein is General transcription factor IIH subunit 4 (GTF2H4) of Homo sapiens (Human).